We begin with the raw amino-acid sequence, 956 residues long: UvrABC system protein A (956 aa).

An ATP-binding site is contributed by 33-40 (GLSGSGKS). Residues 252 to 279 (CPYCGFSVGELEPRMFSFNSPFGACPTC) form a C4-type zinc finger. 2 ABC transporter domains span residues 309-587 (WRPI…KNSI) and 607-936 (GNGL…KYLK). 639 to 646 (GVSGSGKS) serves as a coordination point for ATP. The C4-type zinc finger occupies 738 to 764 (CEACKGDGIIKIEMHFLPDVYVPCEVC).

It belongs to the ABC transporter superfamily. UvrA family. As to quaternary structure, forms a heterotetramer with UvrB during the search for lesions.

It is found in the cytoplasm. The UvrABC repair system catalyzes the recognition and processing of DNA lesions. UvrA is an ATPase and a DNA-binding protein. A damage recognition complex composed of 2 UvrA and 2 UvrB subunits scans DNA for abnormalities. When the presence of a lesion has been verified by UvrB, the UvrA molecules dissociate. This Listeria monocytogenes serotype 4b (strain F2365) protein is UvrABC system protein A.